We begin with the raw amino-acid sequence, 1289 residues long: DNA-directed RNA polymerase subunit beta (1289 aa).

It belongs to the RNA polymerase beta chain family. As to quaternary structure, the RNAP catalytic core consists of 2 alpha, 1 beta, 1 beta' and 1 omega subunit. When a sigma factor is associated with the core the holoenzyme is formed, which can initiate transcription.

The catalysed reaction is RNA(n) + a ribonucleoside 5'-triphosphate = RNA(n+1) + diphosphate. Its function is as follows. DNA-dependent RNA polymerase catalyzes the transcription of DNA into RNA using the four ribonucleoside triphosphates as substrates. This is DNA-directed RNA polymerase subunit beta from Methylacidiphilum infernorum (isolate V4) (Methylokorus infernorum (strain V4)).